A 510-amino-acid chain; its full sequence is MDIRAAEISAILKEQIQNFGREAEVSEVGQVLSVGDGIARVYGLDNVQAGEMVEFENGTRGMALNLEIDNVGVVIFGSDRDIKEGQTVKRTGAIVDVPVGRGLLGRVVDALGNPIDGKGPIEATERRRVDVKAPGIIPRKSVHEPMQTGLKAIDALIPIGRGQRELIIGDRQTGKTAVALDAILNQKPLNVAGAPESQKLYCVYVAVGQKRSTVAQFVKVLEEQGALEYSIVVAATASDPAPMQFLAPFAGTAMGEYFRDNGMHALIIHDDLSKQAVAYRQMSLLLRRPPGREAYPGDVFYLHSRLLERAAKLNDENGAGSLTALPVIETQANDVSAYIPTNVISITDGQIFLESDLFYQGIRPAVNVGLSVSRVGSSAQIKAMKQVAGKIKGELAQYRELAAFAQFGSDLDASTQKLLNRGARLTELLKQSQFSPLKVEEQVVVIYAGTNGYLDNLPLNKVREFEAGFLLAMRTQHQDLLDTIRTSKELSKDSIANLTKALDAFAKSFA.

169–176 contacts ATP; sequence GDRQTGKT.

It belongs to the ATPase alpha/beta chains family. As to quaternary structure, F-type ATPases have 2 components, CF(1) - the catalytic core - and CF(0) - the membrane proton channel. CF(1) has five subunits: alpha(3), beta(3), gamma(1), delta(1), epsilon(1). CF(0) has three main subunits: a(1), b(2) and c(9-12). The alpha and beta chains form an alternating ring which encloses part of the gamma chain. CF(1) is attached to CF(0) by a central stalk formed by the gamma and epsilon chains, while a peripheral stalk is formed by the delta and b chains.

The protein localises to the cell inner membrane. It catalyses the reaction ATP + H2O + 4 H(+)(in) = ADP + phosphate + 5 H(+)(out). Its function is as follows. Produces ATP from ADP in the presence of a proton gradient across the membrane. The alpha chain is a regulatory subunit. The sequence is that of ATP synthase subunit alpha from Azorhizobium caulinodans (strain ATCC 43989 / DSM 5975 / JCM 20966 / LMG 6465 / NBRC 14845 / NCIMB 13405 / ORS 571).